Reading from the N-terminus, the 327-residue chain is GMP reductase (327 aa).

Residue cysteine 175 is the Thioimidate intermediate of the active site. 204-227 is an NADP(+) binding site; sequence IIADGGIRTNGDVAKSIRFGATMV.

It belongs to the IMPDH/GMPR family. GuaC type 2 subfamily.

It catalyses the reaction IMP + NH4(+) + NADP(+) = GMP + NADPH + 2 H(+). Functionally, catalyzes the irreversible NADPH-dependent deamination of GMP to IMP. It functions in the conversion of nucleobase, nucleoside and nucleotide derivatives of G to A nucleotides, and in maintaining the intracellular balance of A and G nucleotides. In Bacillus anthracis, this protein is GMP reductase.